Consider the following 552-residue polypeptide: Histone deacetylase 15 (552 aa).

Residues 86 to 115 (EFVKWCCVNCTMSNPGDMVHCCICGEHKES) form a RanBP2-type zinc finger. The tract at residues 149 to 462 (STAVGFDERM…ATAVIKVLLG (314 aa)) is histone deacetylase. His-277 acts as the Proton donor/acceptor in catalysis. Residues Asp-313, His-315, and Asp-404 each coordinate Zn(2+).

The protein belongs to the histone deacetylase family. HD type 2 subfamily. As to quaternary structure, interacts with PIF3 in the dark. Interacts with HY5. Interacts with MYB96. Forms homotetramers. Requires Zn(2+) as cofactor. As to expression, expressed in stems, leaves, flowers, siliques and mature seeds.

It localises to the nucleus. The protein localises to the cytoplasm. The enzyme catalyses N(6)-acetyl-L-lysyl-[histone] + H2O = L-lysyl-[histone] + acetate. Its activity is regulated as follows. Inhibited by trichostatin A (TSA), a well-known histone deacetylase inhibitor. Responsible for the deacetylation of lysine residues on the N-terminal part of the core histones (H2A, H2B, H3 and H4). Histone deacetylation gives a tag for epigenetic repression and plays an important role in transcriptional regulation, cell cycle progression and developmental events. Histone deacetylases act via the formation of large multiprotein complexes. Represses chlorophyll biosynthesis and photosynthesis in the dark. Is recruited by PIF3 to the promoters of chlorophyll biosynthetic and photosynthetic genes, and represses their transcription by histone deacetylation. Involved in the repression of hypocotyl cell elongation to promote photomorphogenesis. Is recruited by HY5 to the promoters of a subset of cell wall organization and auxin signaling-related genes, and represses gene expression by decreasing the levels of histone H4 acetylation in a light-dependent manner. Promotes abscisic acid (ABA) signaling. Is recruited by MYB96 to the promoters of a subset of Rho GTPase (ROP) genes, which repress ABA signaling at the early stages of signal transduction. Represses ROP expression by removing acetyl groups of histone H3 and H4 from the cognate regions, particularly in the presence of ABA. Represses the plant response to elevated ambient temperature by directly repressing warm temperature-responsive genes. The polypeptide is Histone deacetylase 15 (Arabidopsis thaliana (Mouse-ear cress)).